A 258-amino-acid polypeptide reads, in one-letter code: Clathrin light chain 3 (258 aa).

The span at 1–18 shows a compositional bias: polar residues; sequence MSSTLSNEESGLGDSNRS. Residues 1–96 are disordered; it reads MSSTLSNEES…PPPSAMEKEE (96 aa). Position 2 is an N-acetylserine (serine 2). Residues 34-50 are compositionally biased toward low complexity; sequence SRFQSQRFDSSFSNFDS. The span at 66 to 79 shows a compositional bias: polar residues; it reads RPETQSPPSINSFD. Residues 90-152 form an involved in binding clathrin heavy chain region; it reads SAMEKEEGFA…TIENNKKLNR (63 aa). A coiled-coil region spans residues 105–164; the sequence is RLNALRLEEKEKEEKEMVQQILEAAEQYKAEFYSKRNVTIENNKKLNREKEKFFLENQEK. Positions 224–234 are enriched in basic residues; it reads LKHNPPTHMKP. The interval 224–258 is disordered; it reads LKHNPPTHMKPKLPSPSGADPNVSVSEQVTVTEKL. The segment covering 246-258 has biased composition (polar residues); sequence VSVSEQVTVTEKL.

It belongs to the clathrin light chain family. Clathrin coats are formed from molecules containing 3 heavy chains and 3 light chains.

Its subcellular location is the cytoplasmic vesicle membrane. It is found in the membrane. The protein localises to the coated pit. Clathrin is the major protein of the polyhedral coat of coated pits and vesicles. This chain is Clathrin light chain 3, found in Arabidopsis thaliana (Mouse-ear cress).